Here is a 385-residue protein sequence, read N- to C-terminus: DNA replication and repair protein RecF (385 aa).

Position 30-37 (30-37) interacts with ATP; it reads GANAAGKT.

This sequence belongs to the RecF family.

The protein localises to the cytoplasm. The RecF protein is involved in DNA metabolism; it is required for DNA replication and normal SOS inducibility. RecF binds preferentially to single-stranded, linear DNA. It also seems to bind ATP. The chain is DNA replication and repair protein RecF from Herpetosiphon aurantiacus (strain ATCC 23779 / DSM 785 / 114-95).